Consider the following 1056-residue polypeptide: Isoleucine--tRNA ligase (1056 aa).

The short motif at 56–66 (PFATGLPHYGH) is the 'HIGH' region element. Positions 603-607 (KMSKS) match the 'KMSKS' region motif. Lys-606 is an ATP binding site.

The protein belongs to the class-I aminoacyl-tRNA synthetase family. IleS type 2 subfamily. In terms of assembly, monomer. Zn(2+) serves as cofactor.

The protein localises to the cytoplasm. It catalyses the reaction tRNA(Ile) + L-isoleucine + ATP = L-isoleucyl-tRNA(Ile) + AMP + diphosphate. Functionally, catalyzes the attachment of isoleucine to tRNA(Ile). As IleRS can inadvertently accommodate and process structurally similar amino acids such as valine, to avoid such errors it has two additional distinct tRNA(Ile)-dependent editing activities. One activity is designated as 'pretransfer' editing and involves the hydrolysis of activated Val-AMP. The other activity is designated 'posttransfer' editing and involves deacylation of mischarged Val-tRNA(Ile). This is Isoleucine--tRNA ligase from Bdellovibrio bacteriovorus (strain ATCC 15356 / DSM 50701 / NCIMB 9529 / HD100).